We begin with the raw amino-acid sequence, 119 residues long: Large ribosomal subunit protein uL18 (119 aa).

Belongs to the universal ribosomal protein uL18 family. As to quaternary structure, part of the 50S ribosomal subunit; part of the 5S rRNA/L5/L18/L25 subcomplex. Contacts the 5S and 23S rRNAs.

In terms of biological role, this is one of the proteins that bind and probably mediate the attachment of the 5S RNA into the large ribosomal subunit, where it forms part of the central protuberance. The protein is Large ribosomal subunit protein uL18 of Anaeromyxobacter dehalogenans (strain 2CP-C).